Reading from the N-terminus, the 159-residue chain is Cyclic pyranopterin monophosphate synthase (159 aa).

Substrate contacts are provided by residues Leu75–His77 and Met113–Glu114. Asp128 is a catalytic residue.

This sequence belongs to the MoaC family. In terms of assembly, homohexamer; trimer of dimers.

It carries out the reaction (8S)-3',8-cyclo-7,8-dihydroguanosine 5'-triphosphate = cyclic pyranopterin phosphate + diphosphate. It participates in cofactor biosynthesis; molybdopterin biosynthesis. In terms of biological role, catalyzes the conversion of (8S)-3',8-cyclo-7,8-dihydroguanosine 5'-triphosphate to cyclic pyranopterin monophosphate (cPMP). The sequence is that of Cyclic pyranopterin monophosphate synthase from Yersinia pseudotuberculosis serotype O:1b (strain IP 31758).